A 200-amino-acid polypeptide reads, in one-letter code: Adenylyl-sulfate kinase (200 aa).

36–43 (GLSGSGKS) is a binding site for ATP. The Phosphoserine intermediate role is filled by S110.

It belongs to the APS kinase family.

The catalysed reaction is adenosine 5'-phosphosulfate + ATP = 3'-phosphoadenylyl sulfate + ADP + H(+). Its pathway is sulfur metabolism; hydrogen sulfide biosynthesis; sulfite from sulfate: step 2/3. Functionally, catalyzes the synthesis of activated sulfate. This is Adenylyl-sulfate kinase from Clostridium acetobutylicum (strain ATCC 824 / DSM 792 / JCM 1419 / IAM 19013 / LMG 5710 / NBRC 13948 / NRRL B-527 / VKM B-1787 / 2291 / W).